The sequence spans 169 residues: Peptide methionine sulfoxide reductase MsrA (169 aa).

Cys-10 is a catalytic residue.

It belongs to the MsrA Met sulfoxide reductase family.

The catalysed reaction is L-methionyl-[protein] + [thioredoxin]-disulfide + H2O = L-methionyl-(S)-S-oxide-[protein] + [thioredoxin]-dithiol. It carries out the reaction [thioredoxin]-disulfide + L-methionine + H2O = L-methionine (S)-S-oxide + [thioredoxin]-dithiol. Has an important function as a repair enzyme for proteins that have been inactivated by oxidation. Catalyzes the reversible oxidation-reduction of methionine sulfoxide in proteins to methionine. The protein is Peptide methionine sulfoxide reductase MsrA of Streptococcus agalactiae serotype Ia (strain ATCC 27591 / A909 / CDC SS700).